Here is a 700-residue protein sequence, read N- to C-terminus: mRNA cap guanine-N(7) methyltransferase (700 aa).

Basic and acidic residues-rich tracts occupy residues 1-10 and 52-67; these read MVYDPIRDCD and EPPR…ESHR. 2 disordered regions span residues 1–263 and 277–392; these read MVYD…SVLR and AHAN…ERNK. Polar residues predominate over residues 113 to 128; sequence RSPSMSLSPRSQNQSL. 2 stretches are compositionally biased toward low complexity: residues 129–144 and 220–241; these read PYPS…SAHP and PQPT…TPHH. Residues 429-700 form the mRNA cap 0 methyltransferase domain; it reads SPIIGLKKFN…LYMGFAFEKM (272 aa). 438–439 serves as a coordination point for mRNA; the sequence is NN. Lys442, Gly461, Asp483, Asp512, Gln538, and Tyr543 together coordinate S-adenosyl-L-methionine.

This sequence belongs to the class I-like SAM-binding methyltransferase superfamily. mRNA cap 0 methyltransferase family.

It is found in the nucleus. The enzyme catalyses a 5'-end (5'-triphosphoguanosine)-ribonucleoside in mRNA + S-adenosyl-L-methionine = a 5'-end (N(7)-methyl 5'-triphosphoguanosine)-ribonucleoside in mRNA + S-adenosyl-L-homocysteine. Functionally, responsible for methylating the 5'-cap structure of mRNAs. The polypeptide is mRNA cap guanine-N(7) methyltransferase (ABD1) (Cryptococcus neoformans var. neoformans serotype D (strain B-3501A) (Filobasidiella neoformans)).